A 384-amino-acid chain; its full sequence is 8-amino-7-oxononanoate synthase (384 aa).

Residue R21 coordinates substrate. 108 to 109 serves as a coordination point for pyridoxal 5'-phosphate; that stretch reads GF. Position 133 (H133) interacts with substrate. Positions 179, 207, and 233 each coordinate pyridoxal 5'-phosphate. K236 is subject to N6-(pyridoxal phosphate)lysine. Substrate is bound at residue T350.

It belongs to the class-II pyridoxal-phosphate-dependent aminotransferase family. BioF subfamily. Homodimer. The cofactor is pyridoxal 5'-phosphate.

It carries out the reaction 6-carboxyhexanoyl-[ACP] + L-alanine + H(+) = (8S)-8-amino-7-oxononanoate + holo-[ACP] + CO2. It participates in cofactor biosynthesis; biotin biosynthesis. Functionally, catalyzes the decarboxylative condensation of pimeloyl-[acyl-carrier protein] and L-alanine to produce 8-amino-7-oxononanoate (AON), [acyl-carrier protein], and carbon dioxide. The polypeptide is 8-amino-7-oxononanoate synthase (Erwinia tasmaniensis (strain DSM 17950 / CFBP 7177 / CIP 109463 / NCPPB 4357 / Et1/99)).